Here is a 140-residue protein sequence, read N- to C-terminus: Large ribosomal subunit protein uL11 (140 aa).

It belongs to the universal ribosomal protein uL11 family. As to quaternary structure, part of the ribosomal stalk of the 50S ribosomal subunit. Interacts with L10 and the large rRNA to form the base of the stalk. L10 forms an elongated spine to which L12 dimers bind in a sequential fashion forming a multimeric L10(L12)X complex. Post-translationally, one or more lysine residues are methylated.

Forms part of the ribosomal stalk which helps the ribosome interact with GTP-bound translation factors. This chain is Large ribosomal subunit protein uL11, found in Lawsonia intracellularis (strain PHE/MN1-00).